We begin with the raw amino-acid sequence, 125 residues long: Large ribosomal subunit protein bL21 (125 aa).

The protein belongs to the bacterial ribosomal protein bL21 family. In terms of assembly, part of the 50S ribosomal subunit. Contacts protein L20.

This protein binds to 23S rRNA in the presence of protein L20. This chain is Large ribosomal subunit protein bL21, found in Synechococcus sp. (strain CC9902).